The sequence spans 536 residues: Testis-specific protein 10-interacting protein (536 aa).

Disordered regions lie at residues 1 to 94 (MLNT…LFSS), 185 to 234 (SQGL…PGQG), and 246 to 305 (MEEE…FKGP). The segment covering 48-64 (SGDSLQSQSCQQQRSYS) has biased composition (low complexity). Basic residues predominate over residues 71–83 (KERKPRRRNKKGR). A coiled-coil region spans residues 375–451 (QAWEQQQLKE…LQGIQHRVQA (77 aa)). A disordered region spans residues 491-536 (GNAEGIPRKHRSYRSFGVEMESSPQSPPKTEPTSSQPGRHPSPTLD).

The sequence is that of Testis-specific protein 10-interacting protein (Tsga10ip) from Rattus norvegicus (Rat).